We begin with the raw amino-acid sequence, 434 residues long: UDP-N-acetylglucosamine 1-carboxyvinyltransferase (434 aa).

22-23 (KN) is a binding site for phosphoenolpyruvate. Position 97 (Arg97) interacts with UDP-N-acetyl-alpha-D-glucosamine. Asp121 acts as the Proton donor in catalysis. The UDP-N-acetyl-alpha-D-glucosamine site is built by Asp319 and Met341.

This sequence belongs to the EPSP synthase family. MurA subfamily.

The protein localises to the cytoplasm. It carries out the reaction phosphoenolpyruvate + UDP-N-acetyl-alpha-D-glucosamine = UDP-N-acetyl-3-O-(1-carboxyvinyl)-alpha-D-glucosamine + phosphate. It participates in cell wall biogenesis; peptidoglycan biosynthesis. Its function is as follows. Cell wall formation. Adds enolpyruvyl to UDP-N-acetylglucosamine. The chain is UDP-N-acetylglucosamine 1-carboxyvinyltransferase from Porphyromonas gingivalis (strain ATCC BAA-308 / W83).